Reading from the N-terminus, the 284-residue chain is D-tagatose-1,6-bisphosphate aldolase subunit GatY (284 aa).

Residue Asp82 is the Proton donor of the active site. 2 residues coordinate Zn(2+): His83 and His180. Gly181 is a dihydroxyacetone phosphate binding site. His208 serves as a coordination point for Zn(2+). Residues 209–211 and 230–233 each bind dihydroxyacetone phosphate; these read GAS and NVAT.

The protein belongs to the class II fructose-bisphosphate aldolase family. TagBP aldolase GatY subfamily. Forms a complex with GatZ. Zn(2+) is required as a cofactor.

The enzyme catalyses D-tagatofuranose 1,6-bisphosphate = D-glyceraldehyde 3-phosphate + dihydroxyacetone phosphate. It participates in carbohydrate metabolism; D-tagatose 6-phosphate degradation; D-glyceraldehyde 3-phosphate and glycerone phosphate from D-tagatose 6-phosphate: step 2/2. Catalytic subunit of the tagatose-1,6-bisphosphate aldolase GatYZ, which catalyzes the reversible aldol condensation of dihydroxyacetone phosphate (DHAP or glycerone-phosphate) with glyceraldehyde 3-phosphate (G3P) to produce tagatose 1,6-bisphosphate (TBP). Requires GatZ subunit for full activity and stability. Is involved in the catabolism of galactitol. This is D-tagatose-1,6-bisphosphate aldolase subunit GatY from Escherichia coli (strain 55989 / EAEC).